A 426-amino-acid chain; its full sequence is Protein CgeD (426 aa).

To B.subtilis spore coat polysaccharide biosynthesis protein SpsA.

In terms of biological role, may be involved in maturation of the outermost layer of the spore. This is Protein CgeD (cgeD) from Bacillus subtilis (strain 168).